A 58-amino-acid polypeptide reads, in one-letter code: Small ribosomal subunit protein bS21 (58 aa).

The tract at residues 36–58 is disordered; that stretch reads EHYEKPSVKRKKKSEAARRRKYR. The span at 43-58 shows a compositional bias: basic residues; sequence VKRKKKSEAARRRKYR.

Belongs to the bacterial ribosomal protein bS21 family.

The protein is Small ribosomal subunit protein bS21 of Symbiobacterium thermophilum (strain DSM 24528 / JCM 14929 / IAM 14863 / T).